The primary structure comprises 401 residues: Propionate kinase (401 aa).

Residues asparagine 11 and lysine 18 each coordinate ATP. Mg(2+) is bound at residue asparagine 11. Arginine 86 lines the substrate pocket. Aspartate 143 serves as the catalytic Proton donor/acceptor. ATP contacts are provided by residues histidine 175, histidine 203–glycine 207, aspartate 278–arginine 280, and glycine 326–asparagine 330.

It belongs to the acetokinase family. TdcD subfamily. In terms of assembly, homodimer. Requires Mg(2+) as cofactor.

It carries out the reaction propanoate + ATP = propanoyl phosphate + ADP. It functions in the pathway amino-acid degradation; L-threonine degradation via propanoate pathway; propanoate from L-threonine: step 4/4. Functionally, catalyzes the conversion of propionyl phosphate and ADP to propionate and ATP. The chain is Propionate kinase from Klebsiella pneumoniae (strain 342).